Here is a 126-residue protein sequence, read N- to C-terminus: Glycine cleavage system H protein (126 aa).

The 83-residue stretch at 21–103 (TVTVGISDHA…YESGWIARIK (83 aa)) folds into the Lipoyl-binding domain. The residue at position 62 (Lys-62) is an N6-lipoyllysine.

It belongs to the GcvH family. As to quaternary structure, the glycine cleavage system is composed of four proteins: P, T, L and H. (R)-lipoate is required as a cofactor.

In terms of biological role, the glycine cleavage system catalyzes the degradation of glycine. The H protein shuttles the methylamine group of glycine from the P protein to the T protein. This chain is Glycine cleavage system H protein, found in Aliivibrio fischeri (strain ATCC 700601 / ES114) (Vibrio fischeri).